Reading from the N-terminus, the 287-residue chain is uncharacterized protein (287 aa).

Active-site charge relay system residues include Thr43 and Tyr104. Tyr130 functions as the Proton donor in the catalytic mechanism. Residue Lys158 is the Schiff-base intermediate with substrate of the active site.

The protein belongs to the DapA family. As to quaternary structure, homotetramer.

Its subcellular location is the cytoplasm. This is an uncharacterized protein from Pyrococcus horikoshii (strain ATCC 700860 / DSM 12428 / JCM 9974 / NBRC 100139 / OT-3).